Consider the following 351-residue polypeptide: UDP-3-O-acylglucosamine N-acyltransferase (351 aa).

His-240 acts as the Proton acceptor in catalysis.

The protein belongs to the transferase hexapeptide repeat family. LpxD subfamily. As to quaternary structure, homotrimer.

The catalysed reaction is a UDP-3-O-[(3R)-3-hydroxyacyl]-alpha-D-glucosamine + a (3R)-hydroxyacyl-[ACP] = a UDP-2-N,3-O-bis[(3R)-3-hydroxyacyl]-alpha-D-glucosamine + holo-[ACP] + H(+). It participates in bacterial outer membrane biogenesis; LPS lipid A biosynthesis. In terms of biological role, catalyzes the N-acylation of UDP-3-O-acylglucosamine using 3-hydroxyacyl-ACP as the acyl donor. Is involved in the biosynthesis of lipid A, a phosphorylated glycolipid that anchors the lipopolysaccharide to the outer membrane of the cell. The polypeptide is UDP-3-O-acylglucosamine N-acyltransferase (Pseudomonas savastanoi pv. phaseolicola (strain 1448A / Race 6) (Pseudomonas syringae pv. phaseolicola (strain 1448A / Race 6))).